A 314-amino-acid chain; its full sequence is Methionyl-tRNA formyltransferase (314 aa).

110–113 (SLLP) contributes to the (6S)-5,6,7,8-tetrahydrofolate binding site.

It belongs to the Fmt family.

The catalysed reaction is L-methionyl-tRNA(fMet) + (6R)-10-formyltetrahydrofolate = N-formyl-L-methionyl-tRNA(fMet) + (6S)-5,6,7,8-tetrahydrofolate + H(+). In terms of biological role, attaches a formyl group to the free amino group of methionyl-tRNA(fMet). The formyl group appears to play a dual role in the initiator identity of N-formylmethionyl-tRNA by promoting its recognition by IF2 and preventing the misappropriation of this tRNA by the elongation apparatus. The polypeptide is Methionyl-tRNA formyltransferase (Bacillus cereus (strain B4264)).